A 451-amino-acid polypeptide reads, in one-letter code: Tubulin alpha chain (451 aa).

Q11 serves as a coordination point for GTP. The residue at position 40 (K40) is an N6-acetyllysine. E71, G144, T145, T179, N206, and N228 together coordinate GTP. E71 is a Mg(2+) binding site. The active site involves E254.

Belongs to the tubulin family. Dimer of alpha and beta chains. A typical microtubule is a hollow water-filled tube with an outer diameter of 25 nm and an inner diameter of 15 nM. Alpha-beta heterodimers associate head-to-tail to form protofilaments running lengthwise along the microtubule wall with the beta-tubulin subunit facing the microtubule plus end conferring a structural polarity. Microtubules usually have 13 protofilaments but different protofilament numbers can be found in some organisms and specialized cells. The cofactor is Mg(2+). In terms of processing, undergoes a tyrosination/detyrosination cycle, the cyclic removal and re-addition of a C-terminal tyrosine residue by the enzymes tubulin tyrosine carboxypeptidase (TTCP) and tubulin tyrosine ligase (TTL), respectively. Post-translationally, acetylation of alpha chains at Lys-40 stabilizes microtubules and affects affinity and processivity of microtubule motors. This modification has a role in multiple cellular functions, ranging from cell motility, cell cycle progression or cell differentiation to intracellular trafficking and signaling.

It localises to the cytoplasm. The protein localises to the cytoskeleton. It catalyses the reaction GTP + H2O = GDP + phosphate + H(+). Tubulin is the major constituent of microtubules, a cylinder consisting of laterally associated linear protofilaments composed of alpha- and beta-tubulin heterodimers. Microtubules grow by the addition of GTP-tubulin dimers to the microtubule end, where a stabilizing cap forms. Below the cap, tubulin dimers are in GDP-bound state, owing to GTPase activity of alpha-tubulin. The chain is Tubulin alpha chain from Trypanosoma cruzi.